The chain runs to 908 residues: NADH-quinone oxidoreductase subunit G (908 aa).

In terms of domain architecture, 2Fe-2S ferredoxin-type spans 2–83 (ATIHVDGKEY…GTFISIDDEE (82 aa)). The [2Fe-2S] cluster site is built by C34, C45, C48, and C67. The region spanning 83–122 (EAKQFRESVVEWLMTNHPHDCPVCEEGGNCHLQDMTVMTG) is the 4Fe-4S His(Cys)3-ligated-type domain. Residues H99, C103, C106, C112, C151, C154, C157, C201, C228, C231, C235, and C263 each coordinate [4Fe-4S] cluster. In terms of domain architecture, 4Fe-4S Mo/W bis-MGD-type spans 221 to 277 (MQFAPSICQQCSIGCNISPGERYGELRRIENRYNGTVNHYFLCDRGRFGYGYVNLKD).

The protein belongs to the complex I 75 kDa subunit family. Composed of 13 different subunits. Subunits NuoCD, E, F, and G constitute the peripheral sector of the complex. [2Fe-2S] cluster serves as cofactor. It depends on [4Fe-4S] cluster as a cofactor.

The catalysed reaction is a quinone + NADH + 5 H(+)(in) = a quinol + NAD(+) + 4 H(+)(out). Functionally, NDH-1 shuttles electrons from NADH, via FMN and iron-sulfur (Fe-S) centers, to quinones in the respiratory chain. The immediate electron acceptor for the enzyme in this species is believed to be ubiquinone. Couples the redox reaction to proton translocation (for every two electrons transferred, four hydrogen ions are translocated across the cytoplasmic membrane), and thus conserves the redox energy in a proton gradient. In Escherichia coli O6:H1 (strain CFT073 / ATCC 700928 / UPEC), this protein is NADH-quinone oxidoreductase subunit G (nuoG).